A 511-amino-acid chain; its full sequence is Maturase K (511 aa).

The protein belongs to the intron maturase 2 family. MatK subfamily.

The protein resides in the plastid. It is found in the chloroplast. In terms of biological role, usually encoded in the trnK tRNA gene intron. Probably assists in splicing its own and other chloroplast group II introns. The protein is Maturase K of Hordeum bulbosum (Bulbous barley).